We begin with the raw amino-acid sequence, 57 residues long: MSQMSIFRKADVLSQTMTATIDVGRIENKETYEYYLKSHGFEVTKETDTIWAVKATQ.

This is an uncharacterized protein from His1 virus (isolate Australia/Victoria) (His1V).